Reading from the N-terminus, the 487-residue chain is V-type proton ATPase subunit B2 (487 aa).

Gly-2 bears the N-acetylglycine mark.

The protein belongs to the ATPase alpha/beta chains family. V-ATPase is a heteromultimeric enzyme composed of a peripheral catalytic V1 complex (components A to H) attached to an integral membrane V0 proton pore complex (components: a, c, c'', d and e).

The protein resides in the vacuole membrane. Non-catalytic subunit of the peripheral V1 complex of vacuolar ATPase. V-ATPase is responsible for acidifying a variety of intracellular compartments in eukaryotic cells. This Arabidopsis thaliana (Mouse-ear cress) protein is V-type proton ATPase subunit B2 (VHA-B2).